The following is a 229-amino-acid chain: Isopentenyl-diphosphate delta-isomerase (229 aa).

Substrate is bound at residue Lys39. Mg(2+) contacts are provided by His43 and His54. In terms of domain architecture, Nudix hydrolase spans 52–202 (LLHRAFSMFI…QYGFTPWFKL (151 aa)). The substrate site is built by Gln72 and Lys77. The active site involves Cys89. Ser90 contributes to the substrate binding site. Mg(2+) contacts are provided by Glu152 and Glu154. Residue Glu154 is part of the active site.

This sequence belongs to the IPP isomerase type 1 family. It depends on Mg(2+) as a cofactor.

Its subcellular location is the cytoplasm. The protein resides in the nucleus. The enzyme catalyses isopentenyl diphosphate = dimethylallyl diphosphate. The protein operates within isoprenoid biosynthesis; dimethylallyl diphosphate biosynthesis; dimethylallyl diphosphate from isopentenyl diphosphate: step 1/1. Its function is as follows. Isopentenyl-diphosphate delta-isomerase; part of the second module of ergosterol biosynthesis pathway that includes the middle steps of the pathway. Idi1 catalyzes the 1,3-allylic rearrangement of isopentenyl (IPP) to its highly electrophilic allylic isomer, dimethylallyl diphosphate (DMAPP). The second module is carried out in the vacuole and involves the formation of farnesyl diphosphate, which is also an important intermediate in the biosynthesis of ubiquinone, dolichol, heme and prenylated proteins. Activity by the mevalonate kinase erg12 first converts mevalonate into 5-phosphomevalonate. 5-phosphomevalonate is then further converted to 5-diphosphomevalonate by the phosphomevalonate kinase erg8. The diphosphomevalonate decarboxylase mvd1 then produces isopentenyl diphosphate. The isopentenyl-diphosphate delta-isomerase idi1 then catalyzes the 1,3-allylic rearrangement of the homoallylic substrate isopentenyl (IPP) to its highly electrophilic allylic isomer, dimethylallyl diphosphate (DMAPP). Finally the farnesyl diphosphate synthase fps1 catalyzes the sequential condensation of isopentenyl pyrophosphate with dimethylallyl pyrophosphate, and then with the resultant geranylpyrophosphate to the ultimate product farnesyl pyrophosphate. In Schizosaccharomyces pombe (strain 972 / ATCC 24843) (Fission yeast), this protein is Isopentenyl-diphosphate delta-isomerase.